A 366-amino-acid polypeptide reads, in one-letter code: Adenine DNA glycosylase (366 aa).

A DNA-binding site is contributed by Trp30–Arg31. Glu43 (proton donor/acceptor) is an active-site residue. DNA is bound by residues Gln48 to Thr49, Leu86 to Tyr88, Tyr126, and Glu188. One can recognise a HhH domain in the interval Arg105–Ser133. Residues Cys198, Cys205, Cys208, and Cys214 each contribute to the [4Fe-4S] cluster site. Ser308 provides a ligand contact to DNA.

This sequence belongs to the Nth/MutY family. The cofactor is [4Fe-4S] cluster.

The enzyme catalyses Hydrolyzes free adenine bases from 7,8-dihydro-8-oxoguanine:adenine mismatched double-stranded DNA, leaving an apurinic site.. Base excision repair (BER) glycosylase that initiates repair of A:oxoG to C:G by removing the inappropriately paired adenine base from the DNA backbone, generating an abasic site product. 8-oxoguanine (oxoG) is a genotoxic DNA lesion resulting from oxidation of guanine; this residue is misread by replicative DNA polymerases, that insert adenine instead of cytosine opposite the oxidized damaged base. Shows a powerful dicrimination of A versus C, since it does not cleave cytosine in oxoG:C pairs. May also be able to remove adenine from A:G mispairs, although this activity may not be physiologically relevant. This Geobacillus stearothermophilus (Bacillus stearothermophilus) protein is Adenine DNA glycosylase.